A 644-amino-acid chain; its full sequence is Exoribonuclease 2 (644 aa).

In terms of domain architecture, RNB spans 189–516 (REDLTALDFV…NHRLLKAVIK (328 aa)). Residues 561–643 (DTRFAAEIVD…ETRSIIARPV (83 aa)) enclose the S1 motif domain.

This sequence belongs to the RNR ribonuclease family. RNase II subfamily.

It localises to the cytoplasm. The catalysed reaction is Exonucleolytic cleavage in the 3'- to 5'-direction to yield nucleoside 5'-phosphates.. In terms of biological role, involved in mRNA degradation. Hydrolyzes single-stranded polyribonucleotides processively in the 3' to 5' direction. This chain is Exoribonuclease 2, found in Escherichia coli O127:H6 (strain E2348/69 / EPEC).